We begin with the raw amino-acid sequence, 274 residues long: Large ribosomal subunit protein uL2cz/uL2cy (274 aa).

Disordered stretches follow at residues 1–23 (MAIHLYKTSTPSTRNGAVGSQVK) and 223–274 (MNPV…RRSK).

This sequence belongs to the universal ribosomal protein uL2 family. In terms of assembly, part of the 50S ribosomal subunit.

It localises to the plastid. The protein localises to the chloroplast. This chain is Large ribosomal subunit protein uL2cz/uL2cy (rpl2-A), found in Ranunculus macranthus (Large buttercup).